The chain runs to 103 residues: Pyrimidine/purine nucleoside phosphorylase (103 aa).

It belongs to the nucleoside phosphorylase PpnP family.

It catalyses the reaction a purine D-ribonucleoside + phosphate = a purine nucleobase + alpha-D-ribose 1-phosphate. It carries out the reaction adenosine + phosphate = alpha-D-ribose 1-phosphate + adenine. The enzyme catalyses cytidine + phosphate = cytosine + alpha-D-ribose 1-phosphate. The catalysed reaction is guanosine + phosphate = alpha-D-ribose 1-phosphate + guanine. It catalyses the reaction inosine + phosphate = alpha-D-ribose 1-phosphate + hypoxanthine. It carries out the reaction thymidine + phosphate = 2-deoxy-alpha-D-ribose 1-phosphate + thymine. The enzyme catalyses uridine + phosphate = alpha-D-ribose 1-phosphate + uracil. The catalysed reaction is xanthosine + phosphate = alpha-D-ribose 1-phosphate + xanthine. Its function is as follows. Catalyzes the phosphorolysis of diverse nucleosides, yielding D-ribose 1-phosphate and the respective free bases. Can use uridine, adenosine, guanosine, cytidine, thymidine, inosine and xanthosine as substrates. Also catalyzes the reverse reactions. This Cupriavidus metallidurans (strain ATCC 43123 / DSM 2839 / NBRC 102507 / CH34) (Ralstonia metallidurans) protein is Pyrimidine/purine nucleoside phosphorylase.